Here is a 292-residue protein sequence, read N- to C-terminus: BTB/POZ domain-containing protein KCTD7 (292 aa).

The tract at residues 1–27 is disordered; it reads MVVFSAASDSEKPGDAMSGADKGEEEY. A BTB domain is found at 56-144; that stretch reads IPLNVGGTYF…YAIGPLLENL (89 aa).

The protein resides in the cell membrane. The protein localises to the cytoplasm. It is found in the cytosol. The polypeptide is BTB/POZ domain-containing protein KCTD7 (kctd7) (Danio rerio (Zebrafish)).